A 312-amino-acid chain; its full sequence is Malate dehydrogenase (312 aa).

NAD(+) is bound by residues 7–13 and Asp34; that span reads GAAGGIG. Residues Arg81 and Arg87 each coordinate substrate. Residues Asn94 and 117 to 119 each bind NAD(+); that span reads ITN. Residues Asn119 and Arg153 each coordinate substrate. Residue His177 is the Proton acceptor of the active site. Met227 is a binding site for NAD(+).

The protein belongs to the LDH/MDH superfamily. MDH type 1 family. As to quaternary structure, homodimer.

It catalyses the reaction (S)-malate + NAD(+) = oxaloacetate + NADH + H(+). Catalyzes the reversible oxidation of malate to oxaloacetate. In Moritella marina (Vibrio marinus), this protein is Malate dehydrogenase.